Consider the following 126-residue polypeptide: Defensin-like protein 183 (126 aa).

An N-terminal signal peptide occupies residues 1–26; it reads MEKALSLVVFIIFSIMLASVENKVNA. 8 cysteine pairs are disulfide-bonded: cysteine 29-cysteine 68, cysteine 36-cysteine 55, cysteine 39-cysteine 62, cysteine 43-cysteine 64, cysteine 80-cysteine 126, cysteine 91-cysteine 111, cysteine 96-cysteine 120, and cysteine 100-cysteine 122.

Belongs to the DEFL family.

Its subcellular location is the secreted. The polypeptide is Defensin-like protein 183 (LCR19) (Arabidopsis thaliana (Mouse-ear cress)).